We begin with the raw amino-acid sequence, 337 residues long: MLRVLTGDRPTGRLHLGHYAGSLGTRLRIQSEHECFFIIADLHTLTTRHGRAQLAELPALVRELVLDYLACGIDAQRAVIYLQSAVPEVTELAFIFANLVTVPRLQRIPSLKEMAQAANLSELPFGLLGYPVLQAADILLARAHLVPVGKDNESHVELTREVAKRFNRLYGEVFPLPRALLSDCATLVGTDGQAKMSKSLGNAIFLSDDEETVRRKVRAMYTDPARTRADIPGRVEGNPVFAYHDAFNPNTDEVAHFKERYRAGRVGDTEVKDALARALNTFLEPIRARRAQLEQQPAYLARVLEEGCARMRAEARKTMQRVKEAMGLSARPLVHLP.

Residues 9 to 11 (RPT) and 17 to 18 (GH) each bind ATP. A 'HIGH' region motif is present at residues 10–18 (PTGRLHLGH). Residue D137 participates in L-tryptophan binding. ATP contacts are provided by residues 149 to 151 (GKD), L187, and 195 to 199 (KMSKS). Residues 195 to 199 (KMSKS) carry the 'KMSKS' region motif.

This sequence belongs to the class-I aminoacyl-tRNA synthetase family. In terms of assembly, homodimer.

The protein localises to the cytoplasm. It carries out the reaction tRNA(Trp) + L-tryptophan + ATP = L-tryptophyl-tRNA(Trp) + AMP + diphosphate + H(+). In terms of biological role, catalyzes the attachment of tryptophan to tRNA(Trp). This chain is Tryptophan--tRNA ligase, found in Treponema pallidum (strain Nichols).